Consider the following 285-residue polypeptide: uncharacterized protein (285 aa).

The segment at 1–25 is disordered; sequence MANQKKKTLPPQHQNQQPGFEYLMD. 45–69 serves as a coordination point for NADP(+); sequence IITGGDSGIGRAVSVLFAKEGANVV. Residue Ser177 coordinates substrate. The active-site Proton acceptor is the Tyr190.

It belongs to the short-chain dehydrogenases/reductases (SDR) family.

This is an uncharacterized protein from Bacillus subtilis (strain 168).